The sequence spans 177 residues: Ribosome maturation factor RimP (177 aa).

The protein belongs to the RimP family.

It is found in the cytoplasm. Required for maturation of 30S ribosomal subunits. This Streptococcus sanguinis (strain SK36) protein is Ribosome maturation factor RimP.